Here is a 450-residue protein sequence, read N- to C-terminus: UDP-N-acetylmuramoylalanine--D-glutamate ligase (450 aa).

Position 111-117 (111-117 (GTNGKST)) interacts with ATP.

This sequence belongs to the MurCDEF family.

The protein resides in the cytoplasm. The enzyme catalyses UDP-N-acetyl-alpha-D-muramoyl-L-alanine + D-glutamate + ATP = UDP-N-acetyl-alpha-D-muramoyl-L-alanyl-D-glutamate + ADP + phosphate + H(+). It functions in the pathway cell wall biogenesis; peptidoglycan biosynthesis. Its function is as follows. Cell wall formation. Catalyzes the addition of glutamate to the nucleotide precursor UDP-N-acetylmuramoyl-L-alanine (UMA). In Rickettsia bellii (strain RML369-C), this protein is UDP-N-acetylmuramoylalanine--D-glutamate ligase.